Consider the following 127-residue polypeptide: uncharacterized protein (127 aa).

2 disordered regions span residues 1–22 (MLPA…KMKG) and 53–106 (LVGK…PGPK). A compositionally biased stretch (basic and acidic residues) spans 76–95 (PNGEAHAEQARRKISVEEKQ).

Its subcellular location is the mitochondrion. This is an uncharacterized protein from Arabidopsis thaliana (Mouse-ear cress).